Here is a 126-residue protein sequence, read N- to C-terminus: MIYWIFLALAITAEVIGTLSMKYATVNGQITGHIVMYIMITASYILLSLAIKRVALGVAYALWEGIGILFITLFSVMWFDEPFSLTKLAGLAILVIGIVMLKSGTRKAQGDSGLKARQKERHHATV.

4 consecutive transmembrane segments (helical) span residues methionine 1–methionine 21, isoleucine 30–alanine 50, valine 54–phenylalanine 74, and glutamate 81–leucine 101.

It belongs to the drug/metabolite transporter (DMT) superfamily. Small multidrug resistance (SMR) (TC 2.A.7.1) family. MdtJ subfamily. Forms a complex with MdtI.

It localises to the cell inner membrane. Functionally, catalyzes the excretion of spermidine. In Sodalis glossinidius (strain morsitans), this protein is Spermidine export protein MdtJ.